A 134-amino-acid polypeptide reads, in one-letter code: Small ribosomal subunit protein uS8 (134 aa).

Belongs to the universal ribosomal protein uS8 family. As to quaternary structure, part of the 30S ribosomal subunit. Contacts proteins S5 and S12.

One of the primary rRNA binding proteins, it binds directly to 16S rRNA central domain where it helps coordinate assembly of the platform of the 30S subunit. The polypeptide is Small ribosomal subunit protein uS8 (Thermotoga neapolitana (strain ATCC 49049 / DSM 4359 / NBRC 107923 / NS-E)).